Reading from the N-terminus, the 817-residue chain is Kinesin-like protein 2 (817 aa).

Positions M1–S155 are disordered. Positions S8–S23 are enriched in low complexity. The span at I39–N60 shows a compositional bias: polar residues. A compositionally biased stretch (low complexity) spans S76–A86. A compositionally biased stretch (polar residues) spans P106 to S116. The span at A122–S132 shows a compositional bias: low complexity. A coiled-coil region spans residues S155–E242. ATP contacts are provided by N473, R475, R479, E543, G566, S567, G568, K569, T570, and T778. Residues N473–T807 enclose the Kinesin motor domain.

This sequence belongs to the TRAFAC class myosin-kinesin ATPase superfamily. Kinesin family. NCD subfamily.

It localises to the cytoplasm. The protein localises to the cytoskeleton. It is found in the spindle. Its subcellular location is the nucleus. The catalysed reaction is ATP + H2O = ADP + phosphate + H(+). The enzyme catalyses ATP + H2O + a kinesin associated with a microtubule at position (n) = ADP + phosphate + a kinesin associated with a microtubule at position (n-1, toward the minus end).. Its function is as follows. Minus end-directed microtubule (MT) motor that is involved in spindle microtubule shortening, kinetochore capture, and polarization of cytoplasmic microtubules. During mitosis, promotes spindle microtubule shortening by depolymerization. During metaphase, involved in the recapture of kinetochores displaced from the spindle and their transport towards the spindle pole body; promotes transport both by microtubule end-on pulling and by lateral sliding along the side of the microtubule. During interphase, required for the polarization of cytoplasmic microtubules where it orients the microtubule plus ends toward the cell ends and the minus ends toward the cell center. Required for karyogamy. This Schizosaccharomyces pombe (strain 972 / ATCC 24843) (Fission yeast) protein is Kinesin-like protein 2.